Here is an 84-residue protein sequence, read N- to C-terminus: UPF0410 protein YmgE (84 aa).

Transmembrane regions (helical) follow at residues 1 to 21 (MGIIAWIIFDLIAGIIAKLIM), 27 to 47 (GGFFLTCILGIVGAVVGGWLA), and 58 to 78 (GFNLHSFLVAVVGAILVLGIF).

This sequence belongs to the UPF0410 family.

It localises to the cell inner membrane. This chain is UPF0410 protein YmgE (ymgE), found in Escherichia coli (strain K12).